We begin with the raw amino-acid sequence, 689 residues long: MSEKTFLVEIGTEELPPKALRSLAESFAANFTAELDNAGLAHGTVQWFAAPRRLALKVANLAEAQPDREIEKRGPAIAQAFDAEGKPSKAAEGWARGCGITVDQAERLTTDKGEWLLYRAHVKGESTEALLPNMVATSLAKLPIPKLMRWGASDVHFVRPVHTVTLLLGDKVIPATILGIQSDRVIRGHRFMGEPEFTIDNADQYPEILRERGKVIADYEERKAKIKADAEEAARKIGGNADLSESLLEEVASLVEWPVVLTAKFEEKFLAVPSEALVYTMKGDQKYFPVYANDGKLLPNFIFVANIESKDPQQIISGNEKVVRPRLADAEFFFNTDRKKRLEDNLPRLQTVLFQQQLGTLRDKTDRIQALAGWIAEQIGADVNHATRAGLLSKCDLMTNMVFEFTDTQGVMGMHYARHDGEAEDVAVALNEQYQPRFAGDDLPSNPVACALAIADKMDTLAGIFGIGQHPKGDKDPFALRRAALGVLRIIVEKNLNLDLQTLTEEAVRLYGDKLTNANVVDDVIDFMLGRFRAWYQDEGYTVDTIQAVLARRPTRPADFDARMKAVSHFRTLDAAAALAAANKRVSNILAKSDEVLSDRVNASTLKEPEEIKLAMQVVVLRDKLEPYFAEGRYQDALVELAELREPVDAFFDKVMVMVDDKELRINRLTMLEKLRELFLRVADISLLQ.

This sequence belongs to the class-II aminoacyl-tRNA synthetase family. Tetramer of two alpha and two beta subunits.

Its subcellular location is the cytoplasm. It carries out the reaction tRNA(Gly) + glycine + ATP = glycyl-tRNA(Gly) + AMP + diphosphate. In Escherichia coli O17:K52:H18 (strain UMN026 / ExPEC), this protein is Glycine--tRNA ligase beta subunit.